Reading from the N-terminus, the 394-residue chain is Mitogen-activated protein kinase 2 (394 aa).

The segment covering 1–10 has biased composition (polar residues); that stretch reads MDGPAQQTDT. The tract at residues 1–27 is disordered; that stretch reads MDGPAQQTDTVMAEAAAAQQPAPPSQP. The 286-residue stretch at 61–346 folds into the Protein kinase domain; it reads KPPIMPIGKG…VEDALAHPYL (286 aa). Residues 67–75 and Lys90 each bind ATP; that span reads IGKGAYGIV. Catalysis depends on Asp187, which acts as the Proton acceptor. Phosphothreonine is present on Thr219. A TXY motif is present at residues 219–221; it reads TEY. The residue at position 221 (Tyr221) is a Phosphotyrosine. A Phosphothreonine modification is found at Thr224.

This sequence belongs to the protein kinase superfamily. CMGC Ser/Thr protein kinase family. MAP kinase subfamily. Mg(2+) is required as a cofactor. Activated by cold, wounding and UV-C in a cultivar-dependent manner; phosphorylated at Tyr-221 in cv. Subicho but not in cv. Pungchon. In terms of tissue distribution, expressed constitutively in roots, stems, flowers and fruits of the hot pepper (cv. Subicho).

The catalysed reaction is L-seryl-[protein] + ATP = O-phospho-L-seryl-[protein] + ADP + H(+). It catalyses the reaction L-threonyl-[protein] + ATP = O-phospho-L-threonyl-[protein] + ADP + H(+). With respect to regulation, activated by threonine and tyrosine phosphorylation. In terms of biological role, protein kinase involved in oxidative stress-mediated and innate immune MAP kinase signaling cascades. This chain is Mitogen-activated protein kinase 2, found in Capsicum annuum (Capsicum pepper).